We begin with the raw amino-acid sequence, 77 residues long: Sec-independent protein translocase protein TatA (77 aa).

Residues 1-21 (MGSFSIWHWLVVGILVLLLFG) traverse the membrane as a helical segment. The tract at residues 41-77 (KGMSEDDAPTPAPKQIDAQRAPDLSATPTPTAETENR) is disordered. Over residues 66-77 (ATPTPTAETENR) the composition is skewed to polar residues.

It belongs to the TatA/E family. The Tat system comprises two distinct complexes: a TatABC complex, containing multiple copies of TatA, TatB and TatC subunits, and a separate TatA complex, containing only TatA subunits. Substrates initially bind to the TatABC complex, which probably triggers association of the separate TatA complex to form the active translocon.

It localises to the cell inner membrane. Its function is as follows. Part of the twin-arginine translocation (Tat) system that transports large folded proteins containing a characteristic twin-arginine motif in their signal peptide across membranes. TatA could form the protein-conducting channel of the Tat system. The protein is Sec-independent protein translocase protein TatA of Sphingopyxis alaskensis (strain DSM 13593 / LMG 18877 / RB2256) (Sphingomonas alaskensis).